The primary structure comprises 429 residues: ATP-dependent RNA helicase RhlB (429 aa).

A Q motif motif is present at residues Asp9–Ala37. Residues Leu40–Val219 enclose the Helicase ATP-binding domain. Position 53 to 60 (Ala53 to Thr60) interacts with ATP. The short motif at Asp165–Asp168 is the DEAD box element. The Helicase C-terminal domain occupies Lys243 to Leu390. A disordered region spans residues Val399–Ser429.

It belongs to the DEAD box helicase family. RhlB subfamily. Component of the RNA degradosome, which is a multiprotein complex involved in RNA processing and mRNA degradation.

It localises to the cytoplasm. It carries out the reaction ATP + H2O = ADP + phosphate + H(+). Functionally, DEAD-box RNA helicase involved in RNA degradation. Has RNA-dependent ATPase activity and unwinds double-stranded RNA. The protein is ATP-dependent RNA helicase RhlB of Aeromonas hydrophila subsp. hydrophila (strain ATCC 7966 / DSM 30187 / BCRC 13018 / CCUG 14551 / JCM 1027 / KCTC 2358 / NCIMB 9240 / NCTC 8049).